The primary structure comprises 489 residues: Cysteine--tRNA ligase (489 aa).

Cysteine 29 is a binding site for Zn(2+). A 'HIGH' region motif is present at residues 31–41 (VTVYDYCHLGH). The Zn(2+) site is built by cysteine 215, histidine 240, and glutamate 244. The short motif at 272–276 (KMSKS) is the 'KMSKS' region element. Lysine 275 is a binding site for ATP.

The protein belongs to the class-I aminoacyl-tRNA synthetase family. Monomer. It depends on Zn(2+) as a cofactor.

The protein localises to the cytoplasm. It carries out the reaction tRNA(Cys) + L-cysteine + ATP = L-cysteinyl-tRNA(Cys) + AMP + diphosphate. This chain is Cysteine--tRNA ligase, found in Trichodesmium erythraeum (strain IMS101).